Reading from the N-terminus, the 187-residue chain is Probable chorismate pyruvate-lyase (187 aa).

3 residues coordinate substrate: arginine 77, leucine 115, and glutamate 174.

Belongs to the UbiC family.

Its subcellular location is the cytoplasm. The enzyme catalyses chorismate = 4-hydroxybenzoate + pyruvate. It functions in the pathway cofactor biosynthesis; ubiquinone biosynthesis. In terms of biological role, removes the pyruvyl group from chorismate, with concomitant aromatization of the ring, to provide 4-hydroxybenzoate (4HB) for the ubiquinone pathway. This Shewanella sp. (strain ANA-3) protein is Probable chorismate pyruvate-lyase.